The chain runs to 241 residues: DNA repair protein RecO (241 aa).

This sequence belongs to the RecO family.

Involved in DNA repair and RecF pathway recombination. The chain is DNA repair protein RecO from Yersinia pseudotuberculosis serotype O:1b (strain IP 31758).